Consider the following 256-residue polypeptide: Thiazole synthase (256 aa).

The Schiff-base intermediate with DXP role is filled by lysine 96. Residues glycine 157, 183 to 184 (AG), and 205 to 206 (NT) each bind 1-deoxy-D-xylulose 5-phosphate.

Belongs to the ThiG family. In terms of assembly, homotetramer. Forms heterodimers with either ThiH or ThiS.

The protein resides in the cytoplasm. It carries out the reaction [ThiS sulfur-carrier protein]-C-terminal-Gly-aminoethanethioate + 2-iminoacetate + 1-deoxy-D-xylulose 5-phosphate = [ThiS sulfur-carrier protein]-C-terminal Gly-Gly + 2-[(2R,5Z)-2-carboxy-4-methylthiazol-5(2H)-ylidene]ethyl phosphate + 2 H2O + H(+). It functions in the pathway cofactor biosynthesis; thiamine diphosphate biosynthesis. Catalyzes the rearrangement of 1-deoxy-D-xylulose 5-phosphate (DXP) to produce the thiazole phosphate moiety of thiamine. Sulfur is provided by the thiocarboxylate moiety of the carrier protein ThiS. In vitro, sulfur can be provided by H(2)S. This chain is Thiazole synthase, found in Bacillus cereus (strain AH187).